An 87-amino-acid polypeptide reads, in one-letter code: Sec-independent protein translocase protein TatA (87 aa).

The helical transmembrane segment at 3 to 23 (IFGIGLPEMIVILVVALLIFG) threads the bilayer. Positions 61-87 (EGVKVSTSASEPEKVVDVSSATNTNKN) are disordered.

This sequence belongs to the TatA/E family. As to quaternary structure, forms a complex with TatC.

The protein localises to the cell inner membrane. Its function is as follows. Part of the twin-arginine translocation (Tat) system that transports large folded proteins containing a characteristic twin-arginine motif in their signal peptide across membranes. TatA could form the protein-conducting channel of the Tat system. The polypeptide is Sec-independent protein translocase protein TatA (Trichodesmium erythraeum (strain IMS101)).